We begin with the raw amino-acid sequence, 632 residues long: uncharacterized protein (632 aa).

Helical transmembrane passes span leucine 255 to valine 275, isoleucine 506 to isoleucine 526, methionine 566 to phenylalanine 586, and isoleucine 603 to phenylalanine 623.

The protein localises to the cell membrane. This is an uncharacterized protein from Mycoplasma pneumoniae (strain ATCC 29342 / M129 / Subtype 1) (Mycoplasmoides pneumoniae).